The primary structure comprises 510 residues: Glutamyl-tRNA(Gln) amidotransferase subunit A (510 aa).

Catalysis depends on charge relay system residues Lys-82 and Ser-157. The Acyl-ester intermediate role is filled by Ser-181.

Belongs to the amidase family. GatA subfamily. In terms of assembly, heterotrimer of A, B and C subunits.

The enzyme catalyses L-glutamyl-tRNA(Gln) + L-glutamine + ATP + H2O = L-glutaminyl-tRNA(Gln) + L-glutamate + ADP + phosphate + H(+). Allows the formation of correctly charged Gln-tRNA(Gln) through the transamidation of misacylated Glu-tRNA(Gln) in organisms which lack glutaminyl-tRNA synthetase. The reaction takes place in the presence of glutamine and ATP through an activated gamma-phospho-Glu-tRNA(Gln). The protein is Glutamyl-tRNA(Gln) amidotransferase subunit A of Bordetella avium (strain 197N).